An 831-amino-acid polypeptide reads, in one-letter code: Translation initiation factor IF-2 (831 aa).

The tr-type G domain maps to Thr-329 to Lys-499. The segment at Gly-338–Thr-345 is G1. Gly-338–Thr-345 contributes to the GTP binding site. Positions Gly-363 to His-367 are G2. The G3 stretch occupies residues Asp-385–Gly-388. Residues Asp-385 to His-389 and Asn-439 to Asp-442 contribute to the GTP site. The G4 stretch occupies residues Asn-439 to Asp-442. Residues Ser-475 to Leu-477 are G5.

This sequence belongs to the TRAFAC class translation factor GTPase superfamily. Classic translation factor GTPase family. IF-2 subfamily.

The protein localises to the cytoplasm. In terms of biological role, one of the essential components for the initiation of protein synthesis. Protects formylmethionyl-tRNA from spontaneous hydrolysis and promotes its binding to the 30S ribosomal subunits. Also involved in the hydrolysis of GTP during the formation of the 70S ribosomal complex. The protein is Translation initiation factor IF-2 of Rickettsia rickettsii (strain Iowa).